The following is a 1131-amino-acid chain: Phytochrome B1 (1131 aa).

The segment covering 1-11 (MASGSRTKHSY) has biased composition (basic residues). The segment at 1-26 (MASGSRTKHSYHNSSQGQAQSSGTSN) is disordered. Residues 14 to 25 (SSQGQAQSSGTS) show a composition bias toward low complexity. The GAF domain maps to 229–408 (DIKLLCDTVV…AFGLQLNMEL (180 aa)). Cys-334 serves as a coordination point for phytochromobilin. 2 consecutive PAS domains span residues 622-693 (VARE…LRGV) and 756-808 (DYKA…GEIF). The region spanning 904–1124 (YICQEVKSPL…MIILDLPMTR (221 aa)) is the Histidine kinase domain.

This sequence belongs to the phytochrome family. In terms of assembly, homodimer. In terms of processing, contains one covalently linked phytochromobilin chromophore.

Functionally, regulatory photoreceptor which exists in two forms that are reversibly interconvertible by light: the Pr form that absorbs maximally in the red region of the spectrum and the Pfr form that absorbs maximally in the far-red region. Photoconversion of Pr to Pfr induces an array of morphogenic responses, whereas reconversion of Pfr to Pr cancels the induction of those responses. Pfr controls the expression of a number of nuclear genes including those encoding the small subunit of ribulose-bisphosphate carboxylase, chlorophyll A/B binding protein, protochlorophyllide reductase, rRNA, etc. It also controls the expression of its own gene(s) in a negative feedback fashion. The protein is Phytochrome B1 of Solanum lycopersicum (Tomato).